Here is a 106-residue protein sequence, read N- to C-terminus: SH3 domain-binding glutamic acid-rich-like protein 2-B (106 aa).

An SH3-binding motif is present at residues 61–67; it reads QGNPLPP.

The protein belongs to the SH3BGR family.

It localises to the nucleus. The chain is SH3 domain-binding glutamic acid-rich-like protein 2-B (sh3bgrl2-b) from Xenopus laevis (African clawed frog).